The sequence spans 420 residues: Serine--tRNA ligase (420 aa).

Residue threonine 227–glutamate 229 participates in L-serine binding. Residues arginine 258–glutamate 260 and valine 274 contribute to the ATP site. Residue glutamate 281 coordinates L-serine. Glutamate 345–serine 348 is an ATP binding site. Position 380 (threonine 380) interacts with L-serine.

It belongs to the class-II aminoacyl-tRNA synthetase family. Type-1 seryl-tRNA synthetase subfamily. Homodimer. The tRNA molecule binds across the dimer.

Its subcellular location is the cytoplasm. The catalysed reaction is tRNA(Ser) + L-serine + ATP = L-seryl-tRNA(Ser) + AMP + diphosphate + H(+). The enzyme catalyses tRNA(Sec) + L-serine + ATP = L-seryl-tRNA(Sec) + AMP + diphosphate + H(+). It participates in aminoacyl-tRNA biosynthesis; selenocysteinyl-tRNA(Sec) biosynthesis; L-seryl-tRNA(Sec) from L-serine and tRNA(Sec): step 1/1. In terms of biological role, catalyzes the attachment of serine to tRNA(Ser). Is also able to aminoacylate tRNA(Sec) with serine, to form the misacylated tRNA L-seryl-tRNA(Sec), which will be further converted into selenocysteinyl-tRNA(Sec). This is Serine--tRNA ligase from Nocardia farcinica (strain IFM 10152).